The primary structure comprises 367 residues: tRNA-dihydrouridine(20a/20b) synthase [NAD(P)+] (367 aa).

Residues Pro-45–Val-47 and Gln-99 each bind FMN. The active-site Proton donor is Cys-128. Residues Lys-169, His-197, Asn-231–Asp-233, and Val-255–Arg-256 contribute to the FMN site.

The protein belongs to the Dus family. Dus4 subfamily. It depends on FMN as a cofactor.

It carries out the reaction 5,6-dihydrouridine(20a) in tRNA + NADP(+) = uridine(20a) in tRNA + NADPH + H(+). The enzyme catalyses 5,6-dihydrouridine(20a) in tRNA + NAD(+) = uridine(20a) in tRNA + NADH + H(+). The catalysed reaction is 5,6-dihydrouridine(20b) in tRNA + NAD(+) = uridine(20b) in tRNA + NADH + H(+). It catalyses the reaction 5,6-dihydrouridine(20b) in tRNA + NADP(+) = uridine(20b) in tRNA + NADPH + H(+). It carries out the reaction a 5,6-dihydrouridine in mRNA + NAD(+) = a uridine in mRNA + NADH + H(+). The enzyme catalyses a 5,6-dihydrouridine in mRNA + NADP(+) = a uridine in mRNA + NADPH + H(+). Its function is as follows. Catalyzes the synthesis of dihydrouridine, a modified base found in the D-loop of most tRNAs. Specifically modifies U20a and U20b in cytoplasmic tRNAs. Also able to mediate dihydrouridylation of some mRNAs, thereby affecting their translation. The sequence is that of tRNA-dihydrouridine(20a/20b) synthase [NAD(P)+] from Saccharomyces cerevisiae (strain ATCC 204508 / S288c) (Baker's yeast).